A 671-amino-acid polypeptide reads, in one-letter code: Polyadenylate-binding protein 8 (671 aa).

4 RRM domains span residues 45 to 123, 133 to 210, 224 to 301, and 327 to 404; these read TSLY…YSVR, GNIF…PFVH, TNVY…KAQK, and SNLY…LAQR. The disordered stretch occupies residues 467–526; sequence LVPGMRPGGSPMPNFFMPMMQQGQQQQQQQQQQQRPGGGRRGALPQPQQPSPMMQQQMHP. 2 stretches are compositionally biased toward low complexity: residues 483–501 and 508–525; these read MPMMQQGQQQQQQQQQQQR and GALPQPQQPSPMMQQQMH. Residues 573-650 enclose the PABC domain; the sequence is PIVALATRLA…AMDVLRSVAQ (78 aa).

The protein belongs to the polyadenylate-binding protein type-1 family. In terms of assembly, interacts with ERD15/CID1. Interacts with Turnip mosaic virus (TuMV) VPg-Pro and RNA-dependent RNA polymerase (RdRp). As to expression, expressed predominantly in immature flowers.

It localises to the cytoplasm. The protein resides in the nucleus. Its function is as follows. Binds the poly(A) tail of mRNA. Appears to be an important mediator of the multiple roles of the poly(A) tail in mRNA biogenesis, stability and translation. During infection with potyvirus TuMV, acts as a potential integral component of the viral replicase complex that could play an important role in the regulation of potyviral RNA-dependent RNA polymerase (RdRp). The chain is Polyadenylate-binding protein 8 (PAB8) from Arabidopsis thaliana (Mouse-ear cress).